Here is a 155-residue protein sequence, read N- to C-terminus: Small ribosomal subunit protein uS7c (155 aa).

Belongs to the universal ribosomal protein uS7 family. Part of the 30S ribosomal subunit.

The protein resides in the plastid. It localises to the chloroplast. Functionally, one of the primary rRNA binding proteins, it binds directly to 16S rRNA where it nucleates assembly of the head domain of the 30S subunit. This chain is Small ribosomal subunit protein uS7c (rps7), found in Lilium superbum (Turk's cap lily).